The sequence spans 115 residues: T cell receptor delta variable 2 (115 aa).

The signal sequence occupies residues 1–19 (MQRISSLIHLSLFWAGVMS). Positions 25–115 (PEHQTVPVSI…EGSYYCACDT (91 aa)) constitute an Ig-like domain. A disulfide bond links Cys42 and Cys111.

In terms of assembly, gamma-delta TR is a heterodimer composed of a gamma and delta chain; disulfide-linked. The gamma-delta TR is associated with the transmembrane signaling CD3 coreceptor proteins following the stoichiometry: a single gamma-delta TR heterodimer associates with one CD3D-CD3E heterodimer, one CD3G-CD3E heterodimer and one CD247 homodimer forming a stable octameric structure. Upon activation, gamma-delta TR complex associates with FCER1G to initiate intracellular signaling.

It localises to the cell membrane. Its function is as follows. V region of the variable domain of T cell receptor (TR) delta chain that participates in the antigen recognition. Gamma-delta TRs recognize a variety of self and foreign non-peptide antigens frequently expressed at the epithelial boundaries between the host and external environment, including endogenous lipids presented by MH-like protein CD1D and phosphoantigens presented by butyrophilin-like molecule BTN3A1. Upon antigen recognition induces rapid, innate-like immune responses involved in pathogen clearance and tissue repair. Binding of gamma-delta TR complex to antigen triggers phosphorylation of immunoreceptor tyrosine-based activation motifs (ITAMs) in the CD3 chains by the LCK and FYN kinases, allowing the recruitment, phosphorylation, and activation of ZAP70 that facilitates phosphorylation of the scaffolding proteins LCP2 and LAT. This lead to the formation of a supramolecular signalosome that recruits the phospholipase PLCG1, resulting in calcium mobilization and ERK activation, ultimately leading to T cell expansion and differentiation into effector cells. Gamma-delta TRs are produced through somatic rearrangement of a limited repertoire of variable (V), diversity (D), and joining (J) genes. The potential diversity of gamma-delta TRs is conferred by the unique ability to rearrange (D) genes in tandem and to utilize all three reading frames. The combinatorial diversity is considerably increased by the sequence exonuclease trimming and random nucleotide (N) region additions which occur during the V-(D)-J rearrangements. In Homo sapiens (Human), this protein is T cell receptor delta variable 2.